The chain runs to 220 residues: Small ribosomal subunit protein uS3c (220 aa).

Residues 48-119 (VQKHTNNPFH…KLCLILIKID (72 aa)) form the KH type-2 domain.

Belongs to the universal ribosomal protein uS3 family. In terms of assembly, part of the 30S ribosomal subunit.

Its subcellular location is the plastid. It localises to the chloroplast. The chain is Small ribosomal subunit protein uS3c (rps3) from Psilotum nudum (Whisk fern).